Here is a 339-residue protein sequence, read N- to C-terminus: Ketol-acid reductoisomerase (NADP(+)) (339 aa).

The KARI N-terminal Rossmann domain occupies 1-182 (MRVYYDRDAD…GGGRAGIIET (182 aa)). NADP(+) is bound by residues 24–27 (YGSQ), R48, S51, T53, and 83–86 (DELQ). H108 is a catalytic residue. Residue G134 coordinates NADP(+). One can recognise a KARI C-terminal knotted domain in the interval 183–328 (TFREECETDL…ARLREMMPWI (146 aa)). The Mg(2+) site is built by D191, E195, E227, and E231. S252 provides a ligand contact to substrate.

This sequence belongs to the ketol-acid reductoisomerase family. Requires Mg(2+) as cofactor.

The enzyme catalyses (2R)-2,3-dihydroxy-3-methylbutanoate + NADP(+) = (2S)-2-acetolactate + NADPH + H(+). It carries out the reaction (2R,3R)-2,3-dihydroxy-3-methylpentanoate + NADP(+) = (S)-2-ethyl-2-hydroxy-3-oxobutanoate + NADPH + H(+). It participates in amino-acid biosynthesis; L-isoleucine biosynthesis; L-isoleucine from 2-oxobutanoate: step 2/4. It functions in the pathway amino-acid biosynthesis; L-valine biosynthesis; L-valine from pyruvate: step 2/4. In terms of biological role, involved in the biosynthesis of branched-chain amino acids (BCAA). Catalyzes an alkyl-migration followed by a ketol-acid reduction of (S)-2-acetolactate (S2AL) to yield (R)-2,3-dihydroxy-isovalerate. In the isomerase reaction, S2AL is rearranged via a Mg-dependent methyl migration to produce 3-hydroxy-3-methyl-2-ketobutyrate (HMKB). In the reductase reaction, this 2-ketoacid undergoes a metal-dependent reduction by NADPH to yield (R)-2,3-dihydroxy-isovalerate. The polypeptide is Ketol-acid reductoisomerase (NADP(+)) (Parvibaculum lavamentivorans (strain DS-1 / DSM 13023 / NCIMB 13966)).